Consider the following 370-residue polypeptide: 3-isopropylmalate dehydrogenase (370 aa).

Residue 77 to 90 (GPKWDAVPYDARPE) coordinates NAD(+). Residues Arg97, Arg107, Arg135, and Asp226 each contribute to the substrate site. Asp226, Asp250, and Asp254 together coordinate Mg(2+). 290–302 (GSAPDIAGKGLAN) is a binding site for NAD(+).

Belongs to the isocitrate and isopropylmalate dehydrogenases family. LeuB type 1 subfamily. Homodimer. The cofactor is Mg(2+). Requires Mn(2+) as cofactor.

It is found in the cytoplasm. It carries out the reaction (2R,3S)-3-isopropylmalate + NAD(+) = 4-methyl-2-oxopentanoate + CO2 + NADH. Its pathway is amino-acid biosynthesis; L-leucine biosynthesis; L-leucine from 3-methyl-2-oxobutanoate: step 3/4. Functionally, catalyzes the oxidation of 3-carboxy-2-hydroxy-4-methylpentanoate (3-isopropylmalate) to 3-carboxy-4-methyl-2-oxopentanoate. The product decarboxylates to 4-methyl-2 oxopentanoate. This Rhodopseudomonas palustris (strain HaA2) protein is 3-isopropylmalate dehydrogenase.